The sequence spans 355 residues: Protein-glutamate methylesterase/protein-glutamine glutaminase 3 (355 aa).

In terms of domain architecture, Response regulatory spans 8-126; that stretch reads RVLVVDDSPT…AEELRRWGKE (119 aa). At Asp-59 the chain carries 4-aspartylphosphate. A CheB-type methylesterase domain is found at 152–337; sequence PPTGARVDIF…LASMPELILQ (186 aa). Residues Ser-166, His-193, and Asp-284 contribute to the active site.

Belongs to the CheB family. Post-translationally, phosphorylated by CheA. Phosphorylation of the N-terminal regulatory domain activates the methylesterase activity.

The protein localises to the cytoplasm. It catalyses the reaction [protein]-L-glutamate 5-O-methyl ester + H2O = L-glutamyl-[protein] + methanol + H(+). It carries out the reaction L-glutaminyl-[protein] + H2O = L-glutamyl-[protein] + NH4(+). Its function is as follows. Involved in chemotaxis. Part of a chemotaxis signal transduction system that modulates chemotaxis in response to various stimuli. Catalyzes the demethylation of specific methylglutamate residues introduced into the chemoreceptors (methyl-accepting chemotaxis proteins or MCP) by CheR. Also mediates the irreversible deamidation of specific glutamine residues to glutamic acid. The polypeptide is Protein-glutamate methylesterase/protein-glutamine glutaminase 3 (Myxococcus xanthus (strain DK1622)).